Here is a 328-residue protein sequence, read N- to C-terminus: Thiamine-monophosphate kinase (328 aa).

Positions 30, 45, 46, and 47 each coordinate Mg(2+). Substrate is bound at residue histidine 54. Residues aspartate 75 and aspartate 122 each contribute to the Mg(2+) site. Residues 121–122 (GD) and arginine 146 contribute to the ATP site. Residue aspartate 211 coordinates Mg(2+). Serine 213 provides a ligand contact to ATP. Residue aspartate 214 participates in Mg(2+) binding. Substrate contacts are provided by glutamate 262 and phenylalanine 321.

Belongs to the thiamine-monophosphate kinase family.

It carries out the reaction thiamine phosphate + ATP = thiamine diphosphate + ADP. Its pathway is cofactor biosynthesis; thiamine diphosphate biosynthesis; thiamine diphosphate from thiamine phosphate: step 1/1. In terms of biological role, catalyzes the ATP-dependent phosphorylation of thiamine-monophosphate (TMP) to form thiamine-pyrophosphate (TPP), the active form of vitamin B1. This chain is Thiamine-monophosphate kinase, found in Haemophilus influenzae (strain ATCC 51907 / DSM 11121 / KW20 / Rd).